Here is a 147-residue protein sequence, read N- to C-terminus: Large ribosomal subunit protein bL9 (147 aa).

The protein belongs to the bacterial ribosomal protein bL9 family.

In terms of biological role, binds to the 23S rRNA. In Bacteroides fragilis (strain YCH46), this protein is Large ribosomal subunit protein bL9.